Here is a 650-residue protein sequence, read N- to C-terminus: Replication protein E1 (650 aa).

A Nuclear localization signal motif is present at residues 88-90 (KRK). Phosphoserine; by host occurs at positions 94, 98, and 109. Residues 108–117 (LSPRLDAISI) carry the Nuclear export signal motif. A disordered region spans residues 134–184 (GYGHTQVDIGAPESQVSGGTQHTKGGGGAVQEAEEERVGGDGEAQCSAQTQ). Residues 185-351 (QTPERAADVL…QTVVGHAMQE (167 aa)) form a DNA-binding region region. The SF3 helicase domain occupies 450–600 (VEFVTFMGAL…CPLKSNGDPV (151 aa)). ATP is bound at residue 476–483 (GPSDTGKS). Residue lysine 557 forms a Glycyl lysine isopeptide (Lys-Gly) (interchain with G-Cter in SUMO) linkage. The segment at 620–650 (EGPDEQEEEEDEDGSTSRPFRCVPGEIARPL) is disordered. Positions 622 to 633 (PDEQEEEEDEDG) are enriched in acidic residues.

Belongs to the papillomaviridae E1 protein family. Can form hexamers. Interacts with E2 protein; this interaction increases E1 DNA binding specificity. Interacts with host DNA polymerase subunit POLA2. Interacts with host single stranded DNA-binding protein RPA1. Interacts with host TOP1; this interaction stimulates the enzymatic activity of TOP1. In terms of processing, phosphorylated. Sumoylated.

Its subcellular location is the host nucleus. The enzyme catalyses Couples ATP hydrolysis with the unwinding of duplex DNA by translocating in the 3'-5' direction.. The catalysed reaction is ATP + H2O = ADP + phosphate + H(+). Functionally, ATP-dependent DNA 3'-5' helicase required for initiation of viral DNA replication. It forms a complex with the viral E2 protein. The E1-E2 complex binds to the replication origin which contains binding sites for both proteins. During the initial step, a dimer of E1 interacts with a dimer of protein E2 leading to a complex that binds the viral origin of replication with high specificity. Then, a second dimer of E1 displaces the E2 dimer in an ATP-dependent manner to form the E1 tetramer. Following this, two E1 monomers are added to each half of the site, which results in the formation of two E1 trimers on the viral ori. Subsequently, two hexamers will be created. The double hexamer acts as a bi-directional helicase machinery and unwinds the viral DNA and then recruits the host DNA polymerase to start replication. This is Replication protein E1 from Homo sapiens (Human).